Here is a 258-residue protein sequence, read N- to C-terminus: 5-oxoprolinase subunit A (258 aa).

This sequence belongs to the LamB/PxpA family. As to quaternary structure, forms a complex composed of PxpA, PxpB and PxpC.

The catalysed reaction is 5-oxo-L-proline + ATP + 2 H2O = L-glutamate + ADP + phosphate + H(+). Functionally, catalyzes the cleavage of 5-oxoproline to form L-glutamate coupled to the hydrolysis of ATP to ADP and inorganic phosphate. The sequence is that of 5-oxoprolinase subunit A from Deinococcus radiodurans (strain ATCC 13939 / DSM 20539 / JCM 16871 / CCUG 27074 / LMG 4051 / NBRC 15346 / NCIMB 9279 / VKM B-1422 / R1).